The primary structure comprises 169 residues: Endoribonuclease YbeY (169 aa).

Zn(2+) is bound by residues His-130, His-134, and His-140.

The protein belongs to the endoribonuclease YbeY family. It depends on Zn(2+) as a cofactor.

It is found in the cytoplasm. In terms of biological role, single strand-specific metallo-endoribonuclease involved in late-stage 70S ribosome quality control and in maturation of the 3' terminus of the 16S rRNA. The polypeptide is Endoribonuclease YbeY (Neisseria meningitidis serogroup B (strain ATCC BAA-335 / MC58)).